The chain runs to 457 residues: Phenylalanine-4-hydroxylase (457 aa).

The ACT domain maps to T31–N108. The Fe cation site is built by H285, H290, and E330.

Belongs to the biopterin-dependent aromatic amino acid hydroxylase family. As to quaternary structure, homotetramer. Fe(2+) is required as a cofactor. Expressed in the seam cells of the lateral hypodermis, in the ventral hypodermis and in the hyp7 hypodermal syncytium, in hypodermal cells in the tail and in body wall muscle cells (at protein level).

The protein resides in the cytoplasm. The catalysed reaction is (6R)-L-erythro-5,6,7,8-tetrahydrobiopterin + L-phenylalanine + O2 = (4aS,6R)-4a-hydroxy-L-erythro-5,6,7,8-tetrahydrobiopterin + L-tyrosine. It catalyses the reaction (6R)-L-erythro-5,6,7,8-tetrahydrobiopterin + L-tryptophan + O2 = 5-hydroxy-L-tryptophan + (4aS,6R)-4a-hydroxy-L-erythro-5,6,7,8-tetrahydrobiopterin. It functions in the pathway amino-acid degradation; L-phenylalanine degradation; acetoacetate and fumarate from L-phenylalanine: step 1/6. Its activity is regulated as follows. Inhibited by tetrahydrobiopterin. Unlike its mammalian orthologs, pah-1 does not exhibit allosteric binding behavior for phenylalanine. Catalyzes the hydroxylation of L-phenylalanine to L-tyrosine. Catalyzes the hydroxylation of tryptophan to 5-hydroxy-L-tryptophan. Plays a role in the biosynthesis of a melanin-like cuticle pigment. This Caenorhabditis elegans protein is Phenylalanine-4-hydroxylase.